The primary structure comprises 218 residues: Cell division protein SepF (218 aa).

The segment at 25–115 (DVAASTDNVI…IANRREQYQQ (91 aa)) is disordered. The segment covering 29–43 (STDNVIPRSQQSVRA) has biased composition (polar residues). Over residues 47–63 (PKQEPRNNHVQQDHQAR) the composition is skewed to basic and acidic residues. A compositionally biased stretch (polar residues) spans 102–115 (STSSIANRREQYQQ).

It belongs to the SepF family. In terms of assembly, homodimer. Interacts with FtsZ.

It is found in the cytoplasm. Functionally, cell division protein that is part of the divisome complex and is recruited early to the Z-ring. Probably stimulates Z-ring formation, perhaps through the cross-linking of FtsZ protofilaments. Its function overlaps with FtsA. The polypeptide is Cell division protein SepF (Streptococcus pyogenes serotype M5 (strain Manfredo)).